We begin with the raw amino-acid sequence, 168 residues long: Large ribosomal subunit protein bL9 (168 aa).

A disordered region spans residues E148–A168. The span at A157–A168 shows a compositional bias: low complexity.

This sequence belongs to the bacterial ribosomal protein bL9 family.

Functionally, binds to the 23S rRNA. The sequence is that of Large ribosomal subunit protein bL9 from Herpetosiphon aurantiacus (strain ATCC 23779 / DSM 785 / 114-95).